Reading from the N-terminus, the 160-residue chain is 6,7-dimethyl-8-ribityllumazine synthase (160 aa).

Residues F23, S61–E63, and A85–I87 each bind 5-amino-6-(D-ribitylamino)uracil. Residue D90–T91 coordinates (2S)-2-hydroxy-3-oxobutyl phosphate. H93 (proton donor) is an active-site residue. A 5-amino-6-(D-ribitylamino)uracil-binding site is contributed by F118. A (2S)-2-hydroxy-3-oxobutyl phosphate-binding site is contributed by R132.

This sequence belongs to the DMRL synthase family.

It catalyses the reaction (2S)-2-hydroxy-3-oxobutyl phosphate + 5-amino-6-(D-ribitylamino)uracil = 6,7-dimethyl-8-(1-D-ribityl)lumazine + phosphate + 2 H2O + H(+). It participates in cofactor biosynthesis; riboflavin biosynthesis; riboflavin from 2-hydroxy-3-oxobutyl phosphate and 5-amino-6-(D-ribitylamino)uracil: step 1/2. In terms of biological role, catalyzes the formation of 6,7-dimethyl-8-ribityllumazine by condensation of 5-amino-6-(D-ribitylamino)uracil with 3,4-dihydroxy-2-butanone 4-phosphate. This is the penultimate step in the biosynthesis of riboflavin. This chain is 6,7-dimethyl-8-ribityllumazine synthase, found in Synechococcus sp. (strain CC9605).